Consider the following 217-residue polypeptide: UPF0502 protein Sfri_1696 (217 aa).

It belongs to the UPF0502 family.

The polypeptide is UPF0502 protein Sfri_1696 (Shewanella frigidimarina (strain NCIMB 400)).